The following is a 331-amino-acid chain: Histone-lysine N-methyltransferase, H3 lysine-9 specific dim-5 (331 aa).

A Pre-SET domain is found at 77–159 (VGCSCASDEE…DCPNRVVERG (83 aa)). Zn(2+) contacts are provided by Cys-79, Cys-81, Cys-87, Cys-92, Cys-94, Cys-141, Cys-145, Cys-147, and Cys-151. Residues 162-297 (VPLQIFRTKD…KGTELTFDYV (136 aa)) enclose the SET domain. S-adenosyl-L-methionine contacts are provided by residues 172-174 (RGW), Asp-215, Tyr-217, Arg-251, and 254-255 (NH). Zn(2+) is bound by residues Cys-257, Cys-319, Cys-321, and Cys-326. The Post-SET domain occupies 315–331 (EMTKCLCGTAKCRGYLW).

This sequence belongs to the class V-like SAM-binding methyltransferase superfamily. Histone-lysine methyltransferase family. Suvar3-9 subfamily.

The protein localises to the nucleus. It is found in the chromosome. It carries out the reaction L-lysyl(9)-[histone H3] + 3 S-adenosyl-L-methionine = N(6),N(6),N(6)-trimethyl-L-lysyl(9)-[histone H3] + 3 S-adenosyl-L-homocysteine + 3 H(+). Its function is as follows. Histone methyltransferase that specifically trimethylates histone H3 to form H3K9me3. H3K9me3 marks chromatin regions for DNA methylation. Dim-5 recognizes Arg-8 to Gly-12 of the H3 tail with Thr-11 and Gly-12 being the most important specificity determinants, the recognition of whcih is important to distinguish H3K9 from H3K27 and H4K20. The chain is Histone-lysine N-methyltransferase, H3 lysine-9 specific dim-5 (dim-5) from Neurospora crassa (strain ATCC 24698 / 74-OR23-1A / CBS 708.71 / DSM 1257 / FGSC 987).